Reading from the N-terminus, the 537-residue chain is Tyrosine-protein kinase Yes (537 aa).

Positions 1 to 22 (MGCIKSKEDKGPSIKYRTEPKP) are enriched in basic and acidic residues. The tract at residues 1-60 (MGCIKSKEDKGPSIKYRTEPKPDPGSQYGADPTQATQSPGIKGPAPNFNSHSMTPFGGSS) is disordered. A lipid anchor (N-myristoyl glycine) is attached at Gly2. Cys3 carries the S-palmitoyl cysteine; in membrane form lipid modification. The SH3 domain maps to 85–146 (GGVTVFVALY…PSNYVAPADS (62 aa)). Positions 152-249 (WYFGKMGRKD…GLCYRLTTVC (98 aa)) constitute an SH2 domain. The Protein kinase domain occupies 271-524 (LRLDVKLGQG…YIQSFLEDYF (254 aa)). ATP is bound by residues 277–285 (LGQGCFGEV) and Lys299. The Proton acceptor role is filled by Asp390. At Tyr420 the chain carries Phosphotyrosine; by autocatalysis. Tyr531 carries the post-translational modification Phosphotyrosine; by CSK.

The protein belongs to the protein kinase superfamily. Tyr protein kinase family. SRC subfamily. Autophosphorylated at Tyr-420 inducing activation. In terms of processing, palmitoylation at Cys-3 promotes membrane localization.

It localises to the cell membrane. The protein localises to the cytoplasm. The protein resides in the cytoskeleton. It is found in the microtubule organizing center. Its subcellular location is the centrosome. It localises to the cytosol. The protein localises to the cell junction. The catalysed reaction is L-tyrosyl-[protein] + ATP = O-phospho-L-tyrosyl-[protein] + ADP + H(+). Its function is as follows. Non-receptor protein tyrosine kinase that is involved in the regulation of cell growth and survival, apoptosis, cell-cell adhesion, cytoskeleton remodeling, differentiation, G2/M progression and cytokinesis. This Xenopus laevis (African clawed frog) protein is Tyrosine-protein kinase Yes (yes1).